The following is a 257-amino-acid chain: Kallikrein-1 (257 aa).

The N-terminal stretch at 1 to 18 (MWFLVLCLALSLGGTGRA) is a signal peptide. Residues 19 to 24 (PPIQSR) constitute a propeptide, activation peptide. In terms of domain architecture, Peptidase S1 spans 25–254 (IVGGWECSQP…YVKWIEDTIA (230 aa)). Intrachain disulfides connect Cys-31/Cys-169, Cys-47/Cys-63, Cys-148/Cys-215, Cys-180/Cys-194, and Cys-205/Cys-230. His-62 acts as the Charge relay system in catalysis. An O-linked (GalNAc...) serine glycan is attached at Ser-90. The N-linked (GlcNAc...) asparagine glycan is linked to Asn-99. A glycan (O-linked (GalNAc...) serine) is linked at Ser-101. N-linked (GlcNAc...) asparagine glycosylation occurs at Asn-105. Residue Asp-116 is the Charge relay system of the active site. Asn-160 is a glycosylation site (N-linked (GlcNAc...) asparagine). O-linked (GalNAc...) serine glycosylation is present at Ser-162. Ser-209 serves as the catalytic Charge relay system.

Belongs to the peptidase S1 family. Kallikrein subfamily.

The catalysed reaction is Preferential cleavage of Arg-|-Xaa bonds in small molecule substrates. Highly selective action to release kallidin (lysyl-bradykinin) from kininogen involves hydrolysis of Met-|-Xaa or Leu-|-Xaa.. In terms of biological role, glandular kallikreins cleave Met-Lys and Arg-Ser bonds in kininogen to release Lys-bradykinin. The chain is Kallikrein-1 (KLK1) from Macaca fascicularis (Crab-eating macaque).